The chain runs to 153 residues: Large ribosomal subunit protein uL15 (153 aa).

The segment at 1–42 (MKLNTIKPGIGSAKPKRRVGRGIGSGLGKTCGRGHKGQKSRA) is disordered. Residues 21–31 (RGIGSGLGKTC) show a composition bias toward gly residues.

This sequence belongs to the universal ribosomal protein uL15 family. In terms of assembly, part of the 50S ribosomal subunit.

Functionally, binds to the 23S rRNA. This chain is Large ribosomal subunit protein uL15, found in Nitrosomonas europaea (strain ATCC 19718 / CIP 103999 / KCTC 2705 / NBRC 14298).